A 148-amino-acid chain; its full sequence is Extracellular globin-2B (148 aa).

The region spanning 3-148 (CCSAADRHEV…IADVIKAELP (146 aa)) is the Globin domain. The cysteines at positions 4 and 135 are disulfide-linked. His98 is a heme b binding site.

It belongs to the globin family. Disulfide bonded trimer of chains IIA, IIB, and IIC.

Its subcellular location is the secreted. The polypeptide is Extracellular globin-2B (Tylorrhynchus heterochetus (Japanese palolo worm)).